The following is a 738-amino-acid chain: Ribosomal RNA large subunit methyltransferase K/L (738 aa).

Residues 46–157 (TAYRVCLWSR…ADQAVIGLDL (112 aa)) enclose the THUMP domain.

This sequence belongs to the methyltransferase superfamily. RlmKL family.

Its subcellular location is the cytoplasm. It carries out the reaction guanosine(2445) in 23S rRNA + S-adenosyl-L-methionine = N(2)-methylguanosine(2445) in 23S rRNA + S-adenosyl-L-homocysteine + H(+). The enzyme catalyses guanosine(2069) in 23S rRNA + S-adenosyl-L-methionine = N(2)-methylguanosine(2069) in 23S rRNA + S-adenosyl-L-homocysteine + H(+). Its function is as follows. Specifically methylates the guanine in position 2445 (m2G2445) and the guanine in position 2069 (m7G2069) of 23S rRNA. The polypeptide is Ribosomal RNA large subunit methyltransferase K/L (Methylococcus capsulatus (strain ATCC 33009 / NCIMB 11132 / Bath)).